Here is a 308-residue protein sequence, read N- to C-terminus: Probable manganese-dependent inorganic pyrophosphatase (308 aa).

H9, D13, D15, D75, H97, and D149 together coordinate Mn(2+).

It belongs to the PPase class C family. Requires Mn(2+) as cofactor.

It localises to the cytoplasm. The catalysed reaction is diphosphate + H2O = 2 phosphate + H(+). The protein is Probable manganese-dependent inorganic pyrophosphatase of Listeria monocytogenes serotype 4b (strain CLIP80459).